The chain runs to 458 residues: Biphenyl dioxygenase subunit alpha (458 aa).

The region spanning 58-156 (WLLLGHESHV…KEGDCGFDKA (99 aa)) is the Rieske domain. Cys-100, His-102, Cys-120, and His-123 together coordinate [2Fe-2S] cluster. Fe cation-binding residues include His-233 and His-239.

This sequence belongs to the bacterial ring-hydroxylating dioxygenase alpha subunit family. As to quaternary structure, heterohexamer consisting of three BphA subunits and three BphE subunits. A ferredoxin (BphF) and a ferredoxin reductase (BphG) must be present to obtain activity. It depends on [2Fe-2S] cluster as a cofactor. Fe cation serves as cofactor.

It carries out the reaction biphenyl + NADH + O2 + H(+) = (2R,3S)-3-phenylcyclohexa-3,5-diene-1,2-diol + NAD(+). The protein operates within xenobiotic degradation; biphenyl degradation; 2-hydroxy-2,4-pentadienoate and benzoate from biphenyl: step 1/4. This Metapseudomonas furukawaii (Pseudomonas furukawaii) protein is Biphenyl dioxygenase subunit alpha (bphA).